Here is a 596-residue protein sequence, read N- to C-terminus: MKHIRNFSIIAHIDHGKSTLSDRLIQVCGGLTDREMQKQVLDSMDIERERGITIKAQSVTLNYKANDGEIYQLNFIDTPGHVDFTYEVSRSLAACEGALLVVDAGQGVEAQTLANCYTAIEMNLEVIPVLNKIDLPQADPLRVAEEIEDIIGIDALDAVQCSAKTGVGIAEVLEMIVKDVPPPVGDKDAPLQALIIDSWFDPYQGVVSLVRIKHGELRAGDKIKIMSNDHVHTADQVGVFTPKQTNTGILRTGEVGFVIAGIKEIHGAPVGDTITHQKNAAPLRLPGFQKIKPQVYAGMFPIASDEYESFRDALNKLSLNDASLFFEPENSTALGFGFRCGFLGMLHMEIIQERLEREYDIDLITTAPTVIYEVVTKKDGTFQIDNPSDLPAVNDILEIREPIVEANILVPQEYLGSVITLCVDKRGMQTKMSYHGKQVAVTYELPMAEVVMDFFDKLKSTSRGFASLDYNFKHFQTSDMVRVDILINSERVDALAIIAHRDSAQSRGRQLADALKELIPRQMFDIAIQAAIGGHVIARTTIKQMRKNVIAKCYGGDVSRKKKLLKKQKDGKKRMKQVGNVEVPQEAFLAILKVGK.

A tr-type G domain is found at Lys2 to Val184. GTP is bound by residues Asp14 to Thr19 and Asn131 to Asp134.

It belongs to the TRAFAC class translation factor GTPase superfamily. Classic translation factor GTPase family. LepA subfamily.

Its subcellular location is the cell inner membrane. The enzyme catalyses GTP + H2O = GDP + phosphate + H(+). Functionally, required for accurate and efficient protein synthesis under certain stress conditions. May act as a fidelity factor of the translation reaction, by catalyzing a one-codon backward translocation of tRNAs on improperly translocated ribosomes. Back-translocation proceeds from a post-translocation (POST) complex to a pre-translocation (PRE) complex, thus giving elongation factor G a second chance to translocate the tRNAs correctly. Binds to ribosomes in a GTP-dependent manner. In Pseudoalteromonas translucida (strain TAC 125), this protein is Elongation factor 4.